The primary structure comprises 494 residues: UPF0371 protein SEQ_1471 (494 aa).

The protein belongs to the UPF0371 family.

The protein is UPF0371 protein SEQ_1471 of Streptococcus equi subsp. equi (strain 4047).